Here is a 458-residue protein sequence, read N- to C-terminus: Histidine--tRNA ligase (458 aa).

It belongs to the class-II aminoacyl-tRNA synthetase family. As to quaternary structure, homodimer.

The protein resides in the cytoplasm. It catalyses the reaction tRNA(His) + L-histidine + ATP = L-histidyl-tRNA(His) + AMP + diphosphate + H(+). The sequence is that of Histidine--tRNA ligase from Micrococcus luteus (strain ATCC 4698 / DSM 20030 / JCM 1464 / CCM 169 / CCUG 5858 / IAM 1056 / NBRC 3333 / NCIMB 9278 / NCTC 2665 / VKM Ac-2230) (Micrococcus lysodeikticus).